The following is a 633-amino-acid chain: Probable potassium transport system protein Kup 2 (633 aa).

A run of 12 helical transmembrane segments spans residues 18–38 (FLAL…TSPL), 61–81 (LVSL…VLFL), 107–127 (PVLM…DAMI), 143–163 (VAPA…LLLF), 173–193 (VSVF…AAGV), 211–231 (AIGF…AIFL), 255–275 (WFAV…ALVL), 287–307 (LMFP…ATII), 345–365 (IYLP…MLMF), 371–391 (LAPA…ILAF), 402–422 (ALTA…FLGA), and 427–447 (VHHG…MMWT).

The protein belongs to the HAK/KUP transporter (TC 2.A.72) family.

Its subcellular location is the cell inner membrane. It catalyses the reaction K(+)(in) + H(+)(in) = K(+)(out) + H(+)(out). Functionally, transport of potassium into the cell. Likely operates as a K(+):H(+) symporter. This Rhizobium meliloti (strain 1021) (Ensifer meliloti) protein is Probable potassium transport system protein Kup 2.